Consider the following 505-residue polypeptide: Glucose-6-phosphate 1-dehydrogenase (505 aa).

Ser2 carries the N-acetylserine modification. Residues 18-25 (GASGDLAK) and Arg52 each bind NADP(+). At Ser142 the chain carries Phosphoserine. Tyr145 carries the phosphotyrosine modification. Lys157 contributes to the NADP(+) binding site. D-glucose 6-phosphate-binding positions include Lys157, 187 to 191 (HYLGK), Glu225, and Asp244. The active-site Proton acceptor is His249. Arg340 lines the NADP(+) pocket. Lys343 is a binding site for D-glucose 6-phosphate. NADP(+) contacts are provided by Lys349, Arg353, and Arg375. Residue Gln377 coordinates D-glucose 6-phosphate. NADP(+) contacts are provided by residues 383–385 (YLK) and Arg470.

This sequence belongs to the glucose-6-phosphate dehydrogenase family.

The enzyme catalyses D-glucose 6-phosphate + NADP(+) = 6-phospho-D-glucono-1,5-lactone + NADPH + H(+). The protein operates within carbohydrate degradation; pentose phosphate pathway; D-ribulose 5-phosphate from D-glucose 6-phosphate (oxidative stage): step 1/3. Catalyzes the rate-limiting step of the oxidative pentose-phosphate pathway, which represents a route for the dissimilation of carbohydrates besides glycolysis. The main function of this enzyme is to provide reducing power (NADPH) and pentose phosphates for fatty acid and nucleic acid synthesis. This is Glucose-6-phosphate 1-dehydrogenase (ZWF1) from Saccharomyces cerevisiae (strain ATCC 204508 / S288c) (Baker's yeast).